A 505-amino-acid polypeptide reads, in one-letter code: L-carnitine/gamma-butyrobetaine antiporter (505 aa).

Helical transmembrane passes span 10–30, 50–70, 92–112, 143–163, 195–215, 231–251, 263–283, 316–336, 347–367, 403–423, 446–466, and 475–495; these read IEPKVFFPPLIIVGILCWLTV, IWGWAFEWYMVVMLIGWFWLV, IFMMFASCTSAAVLFWGSIEI, GPLPWATYSFLSVAFAYFFFV, FYLVALIFAMGTSLGLATPLV, LDAIIITCWIILNAICVACGL, SYLSFLMLGWVFIVSGASFIM, WTVFYWAWWVIYAIQMSIFLA, LCFGMVLGLTASTWILWTVLG, LSTATMWGFFILCFIATVTLI, LLVRIGWSVLVGIIGIVLLAL, and AIIAGGCPLFFVNIMVTLSFI.

This sequence belongs to the BCCT transporter (TC 2.A.15) family. CaiT subfamily. As to quaternary structure, homotrimer.

It is found in the cell inner membrane. The enzyme catalyses 4-(trimethylamino)butanoate(in) + (R)-carnitine(out) = 4-(trimethylamino)butanoate(out) + (R)-carnitine(in). Its pathway is amine and polyamine metabolism; carnitine metabolism. In terms of biological role, catalyzes the exchange of L-carnitine for gamma-butyrobetaine. The polypeptide is L-carnitine/gamma-butyrobetaine antiporter (Salmonella arizonae (strain ATCC BAA-731 / CDC346-86 / RSK2980)).